We begin with the raw amino-acid sequence, 447 residues long: Chromosomal replication initiator protein DnaA (447 aa).

The interval Met-1–Leu-74 is domain I, interacts with DnaA modulators. The segment at Leu-74–Ser-108 is domain II. The disordered stretch occupies residues Glu-85–Lys-107. A compositionally biased stretch (polar residues) spans Lys-97 to Lys-107. Positions Met-109–Ser-325 are domain III, AAA+ region. ATP is bound by residues Gly-153, Gly-155, Lys-156, and Thr-157. The interval Ser-326–Ile-447 is domain IV, binds dsDNA.

Belongs to the DnaA family. Oligomerizes as a right-handed, spiral filament on DNA at oriC.

The protein resides in the cytoplasm. Its function is as follows. Plays an essential role in the initiation and regulation of chromosomal replication. ATP-DnaA binds to the origin of replication (oriC) to initiate formation of the DNA replication initiation complex once per cell cycle. Binds the DnaA box (a 9 base pair repeat at the origin) and separates the double-stranded (ds)DNA. Forms a right-handed helical filament on oriC DNA; dsDNA binds to the exterior of the filament while single-stranded (ss)DNA is stabiized in the filament's interior. The ATP-DnaA-oriC complex binds and stabilizes one strand of the AT-rich DNA unwinding element (DUE), permitting loading of DNA polymerase. After initiation quickly degrades to an ADP-DnaA complex that is not apt for DNA replication. Binds acidic phospholipids. The sequence is that of Chromosomal replication initiator protein DnaA from Oceanobacillus iheyensis (strain DSM 14371 / CIP 107618 / JCM 11309 / KCTC 3954 / HTE831).